Consider the following 572-residue polypeptide: Phosphoenolpyruvate-protein phosphotransferase (572 aa).

The active-site Tele-phosphohistidine intermediate is the histidine 190. Arginine 297 and arginine 333 together coordinate phosphoenolpyruvate. Mg(2+)-binding residues include glutamate 427 and aspartate 451. Residues 450–451 (ND) and arginine 461 each bind phosphoenolpyruvate. The Proton donor role is filled by cysteine 498.

Belongs to the PEP-utilizing enzyme family. Homodimer. Mg(2+) serves as cofactor.

It is found in the cytoplasm. It carries out the reaction L-histidyl-[protein] + phosphoenolpyruvate = N(pros)-phospho-L-histidyl-[protein] + pyruvate. Functionally, general (non sugar-specific) component of the phosphoenolpyruvate-dependent sugar phosphotransferase system (sugar PTS). This major carbohydrate active-transport system catalyzes the phosphorylation of incoming sugar substrates concomitantly with their translocation across the cell membrane. Enzyme I transfers the phosphoryl group from phosphoenolpyruvate (PEP) to the phosphoryl carrier protein (HPr). In Mycoplasma genitalium (strain ATCC 33530 / DSM 19775 / NCTC 10195 / G37) (Mycoplasmoides genitalium), this protein is Phosphoenolpyruvate-protein phosphotransferase (ptsI).